Consider the following 209-residue polypeptide: Glycolipid transfer protein B (209 aa).

2 repeat units span residues 45 to 55 (IKADITGNITK) and 56 to 66 (IRSVYESNPTQ). Residues 45-66 (IKADITGNITKIRSVYESNPTQ) form a 2 X 12 AA approximate tandem repeats region. A beta-D-galactosyl-(1-&gt;4)-beta-D-glucosyl-(1&lt;-&gt;1)-N-[(9Z)-octadecenoyl]-sphing-4-enine-binding site is contributed by 48–55 (DITGNITK). Beta-D-galactosyl-(1-&gt;4)-beta-D-glucosyl-(1&lt;-&gt;1)-N-[(9Z)-octadecenoyl]-sphing-4-enine is bound by residues H140 and Y207.

This sequence belongs to the GLTP family.

It localises to the cytoplasm. Functionally, accelerates the intermembrane transfer of various glycolipids. Catalyzes the transfer of various glycosphingolipids between membranes but does not catalyze the transfer of phospholipids. May be involved in the intracellular translocation of glucosylceramides. This Xenopus laevis (African clawed frog) protein is Glycolipid transfer protein B (gltp-b).